A 246-amino-acid chain; its full sequence is U11/U12 small nuclear ribonucleoprotein 35 kDa protein (246 aa).

One can recognise an RRM domain in the interval 51–129 (LTLFVARLNL…HEIFVDYELE (79 aa)). Lysine 172 is covalently cross-linked (Glycyl lysine isopeptide (Lys-Gly) (interchain with G-Cter in SUMO2)). The segment at 187–217 (SRSRERHWDSRTRDRDHDRGREKRWQEREPT) is disordered. Positions 192–217 (RHWDSRTRDRDHDRGREKRWQEREPT) are enriched in basic and acidic residues.

As to quaternary structure, component of the U11/U12 snRNPs that are part of the U12-type spliceosome. In terms of tissue distribution, expressed in heart, liver, skeletal muscle and pancreas.

It is found in the nucleus. The sequence is that of U11/U12 small nuclear ribonucleoprotein 35 kDa protein (SNRNP35) from Homo sapiens (Human).